We begin with the raw amino-acid sequence, 198 residues long: Elongation factor Ts (198 aa).

The tract at residues 82–85 (TDFV) is involved in Mg(2+) ion dislocation from EF-Tu.

Belongs to the EF-Ts family.

The protein localises to the cytoplasm. Functionally, associates with the EF-Tu.GDP complex and induces the exchange of GDP to GTP. It remains bound to the aminoacyl-tRNA.EF-Tu.GTP complex up to the GTP hydrolysis stage on the ribosome. The chain is Elongation factor Ts from Oleidesulfovibrio alaskensis (strain ATCC BAA-1058 / DSM 17464 / G20) (Desulfovibrio alaskensis).